A 499-amino-acid polypeptide reads, in one-letter code: uncharacterized protein (499 aa).

A run of 12 helical transmembrane segments spans residues 51–71, 98–118, 127–147, 155–175, 187–207, 220–240, 301–321, 325–345, 352–372, 378–398, 412–432, and 444–464; these read LLFRLDLVLAPTIMILYLVAF, IIASVFYVTFILFEMPTTLLM, LAFIVISYSLTTIFTGFCHNF, LVLGFCEAGLFPCLALYLTMI, YLFASSALSGAFGGLFAYAVL, WLFIIEGLIGFVCGVAVYFII, CLYGFSTFLPAIISGMGYTSL, YMTIPVYILGAATYIAASFLS, GIILIIGNIFPIVGYILLLAC, VLYFACYLCSVGVYTGAGLNV, ATAISLQLAIANSSGILAGQI, and LTSLIAIFISTVLHVVNIFFL.

It belongs to the major facilitator superfamily. Allantoate permease family.

The protein resides in the golgi apparatus. Its subcellular location is the membrane. This is an uncharacterized protein from Schizosaccharomyces pombe (strain 972 / ATCC 24843) (Fission yeast).